The chain runs to 327 residues: Ribosomal RNA large subunit methyltransferase F (327 aa).

The interval 1–24 is disordered; the sequence is MPRKTSSQPRPAEPKAVLHPRNRH.

The protein belongs to the methyltransferase superfamily. METTL16/RlmF family.

The protein localises to the cytoplasm. It catalyses the reaction adenosine(1618) in 23S rRNA + S-adenosyl-L-methionine = N(6)-methyladenosine(1618) in 23S rRNA + S-adenosyl-L-homocysteine + H(+). Its function is as follows. Specifically methylates the adenine in position 1618 of 23S rRNA. The sequence is that of Ribosomal RNA large subunit methyltransferase F from Stutzerimonas stutzeri (strain A1501) (Pseudomonas stutzeri).